The primary structure comprises 156 residues: Transcription elongation factor GreA (156 aa).

Residues 1–84 (MAKYTISKHR…IEDVMRSTDE (84 aa)) are a coiled coil.

Belongs to the GreA/GreB family.

Its function is as follows. Necessary for efficient RNA polymerase transcription elongation past template-encoded arresting sites. The arresting sites in DNA have the property of trapping a certain fraction of elongating RNA polymerases that pass through, resulting in locked ternary complexes. Cleavage of the nascent transcript by cleavage factors such as GreA or GreB allows the resumption of elongation from the new 3'terminus. GreA releases sequences of 2 to 3 nucleotides. In Ureaplasma urealyticum serovar 10 (strain ATCC 33699 / Western), this protein is Transcription elongation factor GreA.